We begin with the raw amino-acid sequence, 133 residues long: uncharacterized protein (133 aa).

The protein belongs to the ycf68 family.

The protein resides in the plastid. Its subcellular location is the chloroplast. This is an uncharacterized protein from Oryza sativa subsp. japonica (Rice).